The following is a 150-amino-acid chain: MRVLVQRVSQAAVTVDGQTSGEIGAGALLLVGIEESDGPDDIGWLVRKISQLRIFNDEAGVMNRSLIDCGGEALAVSQFTLHASVKKGNRPSYSRAARGEISRPLFDRFVAELSAALGKTVPTGVFGADMRVSLVNDGPVTIWLDSRNPE.

The Gly-cisPro motif, important for rejection of L-amino acids signature appears at glycine 138 to proline 139.

It belongs to the DTD family. Homodimer.

It localises to the cytoplasm. It catalyses the reaction glycyl-tRNA(Ala) + H2O = tRNA(Ala) + glycine + H(+). The catalysed reaction is a D-aminoacyl-tRNA + H2O = a tRNA + a D-alpha-amino acid + H(+). An aminoacyl-tRNA editing enzyme that deacylates mischarged D-aminoacyl-tRNAs. Also deacylates mischarged glycyl-tRNA(Ala), protecting cells against glycine mischarging by AlaRS. Acts via tRNA-based rather than protein-based catalysis; rejects L-amino acids rather than detecting D-amino acids in the active site. By recycling D-aminoacyl-tRNA to D-amino acids and free tRNA molecules, this enzyme counteracts the toxicity associated with the formation of D-aminoacyl-tRNA entities in vivo and helps enforce protein L-homochirality. The sequence is that of D-aminoacyl-tRNA deacylase from Chromobacterium violaceum (strain ATCC 12472 / DSM 30191 / JCM 1249 / CCUG 213 / NBRC 12614 / NCIMB 9131 / NCTC 9757 / MK).